The chain runs to 321 residues: Lipoyl synthase (321 aa).

[4Fe-4S] cluster is bound by residues Cys-68, Cys-73, Cys-79, Cys-94, Cys-98, Cys-101, and Ser-308. A Radical SAM core domain is found at Phe-80–Thr-297.

This sequence belongs to the radical SAM superfamily. Lipoyl synthase family. [4Fe-4S] cluster is required as a cofactor.

It is found in the cytoplasm. It carries out the reaction [[Fe-S] cluster scaffold protein carrying a second [4Fe-4S](2+) cluster] + N(6)-octanoyl-L-lysyl-[protein] + 2 oxidized [2Fe-2S]-[ferredoxin] + 2 S-adenosyl-L-methionine + 4 H(+) = [[Fe-S] cluster scaffold protein] + N(6)-[(R)-dihydrolipoyl]-L-lysyl-[protein] + 4 Fe(3+) + 2 hydrogen sulfide + 2 5'-deoxyadenosine + 2 L-methionine + 2 reduced [2Fe-2S]-[ferredoxin]. The protein operates within protein modification; protein lipoylation via endogenous pathway; protein N(6)-(lipoyl)lysine from octanoyl-[acyl-carrier-protein]: step 2/2. Functionally, catalyzes the radical-mediated insertion of two sulfur atoms into the C-6 and C-8 positions of the octanoyl moiety bound to the lipoyl domains of lipoate-dependent enzymes, thereby converting the octanoylated domains into lipoylated derivatives. The sequence is that of Lipoyl synthase from Yersinia pseudotuberculosis serotype O:1b (strain IP 31758).